We begin with the raw amino-acid sequence, 167 residues long: ATP synthase subunit b (167 aa).

Residues 9–29 (ALPLGNMLFIIIAFLLLMLIL) form a helical membrane-spanning segment.

The protein belongs to the ATPase B chain family. F-type ATPases have 2 components, F(1) - the catalytic core - and F(0) - the membrane proton channel. F(1) has five subunits: alpha(3), beta(3), gamma(1), delta(1), epsilon(1). F(0) has three main subunits: a(1), b(2) and c(10-14). The alpha and beta chains form an alternating ring which encloses part of the gamma chain. F(1) is attached to F(0) by a central stalk formed by the gamma and epsilon chains, while a peripheral stalk is formed by the delta and b chains.

Its subcellular location is the cell membrane. In terms of biological role, f(1)F(0) ATP synthase produces ATP from ADP in the presence of a proton or sodium gradient. F-type ATPases consist of two structural domains, F(1) containing the extramembraneous catalytic core and F(0) containing the membrane proton channel, linked together by a central stalk and a peripheral stalk. During catalysis, ATP synthesis in the catalytic domain of F(1) is coupled via a rotary mechanism of the central stalk subunits to proton translocation. Component of the F(0) channel, it forms part of the peripheral stalk, linking F(1) to F(0). The polypeptide is ATP synthase subunit b (Leuconostoc mesenteroides subsp. mesenteroides (strain ATCC 8293 / DSM 20343 / BCRC 11652 / CCM 1803 / JCM 6124 / NCDO 523 / NBRC 100496 / NCIMB 8023 / NCTC 12954 / NRRL B-1118 / 37Y)).